The primary structure comprises 78 residues: Ferredoxin oxidoreductase 2 subunit ForD (78 aa).

2 4Fe-4S ferredoxin-type domains span residues 3 to 35 (FVAD…FKAS) and 37 to 66 (NSAW…HCIE). [4Fe-4S] cluster contacts are provided by Cys-12, Cys-17, Cys-20, Cys-24, Cys-46, Cys-49, Cys-52, and Cys-56.

Heterotetramer of one alpha, one beta, one delta and one gamma chain. It depends on [4Fe-4S] cluster as a cofactor.

The polypeptide is Ferredoxin oxidoreductase 2 subunit ForD (forD2) (Aquifex aeolicus (strain VF5)).